Here is a 266-residue protein sequence, read N- to C-terminus: Undecaprenyl-diphosphatase (266 aa).

8 consecutive transmembrane segments (helical) span residues 1 to 21 (METF…FLPI), 39 to 59 (QGLS…VIYF), 87 to 107 (WWII…KDFI), 111 to 131 (FRNT…LWAA), 144 to 164 (MGWK…IPGT), 183 to 203 (AAAR…ALLV), 218 to 238 (ALGL…HFFL), and 244 to 264 (IGMT…LGLL).

This sequence belongs to the UppP family.

It localises to the cell inner membrane. The catalysed reaction is di-trans,octa-cis-undecaprenyl diphosphate + H2O = di-trans,octa-cis-undecaprenyl phosphate + phosphate + H(+). In terms of biological role, catalyzes the dephosphorylation of undecaprenyl diphosphate (UPP). Confers resistance to bacitracin. This is Undecaprenyl-diphosphatase from Shewanella frigidimarina (strain NCIMB 400).